A 149-amino-acid polypeptide reads, in one-letter code: Probable flagellum biosynthesis repressor protein FlbT (149 aa).

The protein belongs to the FlbT family.

Its function is as follows. Has a post-transcriptional repressor function in flagellum biogenesis. Associates with the 5'-UTR of fljK mRNA and promotes its degradation. The sequence is that of Probable flagellum biosynthesis repressor protein FlbT from Allorhizobium ampelinum (strain ATCC BAA-846 / DSM 112012 / S4) (Agrobacterium vitis (strain S4)).